A 377-amino-acid chain; its full sequence is Cell division protein FtsZ (377 aa).

Acidic residues predominate over residues 1–16 (MDSIVDDAIDEAEDMG). Residues 1–33 (MDSIVDDAIDEAEDMGDGSAEVGGPTDINRSGT) form a disordered region. Residues 57–61 (GAGGN), 144–146 (GTG), E175, R179, and D222 contribute to the GTP site.

This sequence belongs to the FtsZ family. As to quaternary structure, homodimer. Polymerizes to form a dynamic ring structure in a strictly GTP-dependent manner. Interacts directly with several other division proteins.

The protein localises to the cytoplasm. In terms of biological role, essential cell division protein that forms a contractile ring structure (Z ring) at the future cell division site. The regulation of the ring assembly controls the timing and the location of cell division. One of the functions of the FtsZ ring is to recruit other cell division proteins to the septum to produce a new cell wall between the dividing cells. Binds GTP and shows GTPase activity. The chain is Cell division protein FtsZ from Haloferax mediterranei (strain ATCC 33500 / DSM 1411 / JCM 8866 / NBRC 14739 / NCIMB 2177 / R-4) (Halobacterium mediterranei).